A 236-amino-acid chain; its full sequence is MAKIKPQALLNQSKKKKGPSRISISTIIVCNLVVAVVILSLVTTYRHWSQRSRNTIEHETRSQRFEDTNTASGQKTYDLPGFADINTSKGLITVELFKEGSPEVVDKFLDLCQKDHFKGMPFQRVIKNYLVQAGHSPSSIPVEEWTAKGKLRGRLHIGPKHEAFMLGTPKNKGNNKDFELLITTAPIPDLNDQLIVFGRVLKGEDVVQEIEEVDTDEHFQPKSPIGITGVVLKLET.

The chain crosses the membrane as a helical; Signal-anchor for type II membrane protein span at residues 22-42 (ISISTIIVCNLVVAVVILSLV). Residues 52-71 (SRNTIEHETRSQRFEDTNTA) form a disordered region. Over residues 54–67 (NTIEHETRSQRFED) the composition is skewed to basic and acidic residues. The 151-residue stretch at 82–232 (FADINTSKGL…SPIGITGVVL (151 aa)) folds into the PPIase cyclophilin-type domain. N-linked (GlcNAc...) asparagine glycosylation is present at N86.

The protein belongs to the cyclophilin-type PPIase family. In terms of tissue distribution, ubiquitous.

Its subcellular location is the membrane. The enzyme catalyses [protein]-peptidylproline (omega=180) = [protein]-peptidylproline (omega=0). In terms of biological role, PPIases accelerate the folding of proteins. It catalyzes the cis-trans isomerization of proline imidic peptide bonds in oligopeptides. The sequence is that of Peptidyl-prolyl cis-trans isomerase CYP21-4 (CYP21-4) from Arabidopsis thaliana (Mouse-ear cress).